Consider the following 139-residue polypeptide: Putative truncated protein trichome birefringence-like 46 (139 aa).

Belongs to the PC-esterase family. TBL subfamily.

The protein is Putative truncated protein trichome birefringence-like 46 (TBL46) of Arabidopsis thaliana (Mouse-ear cress).